Here is a 153-residue protein sequence, read N- to C-terminus: Aspartate carbamoyltransferase regulatory chain (153 aa).

Zn(2+) is bound by residues Cys109, Cys114, Cys138, and Cys141.

This sequence belongs to the PyrI family. As to quaternary structure, contains catalytic and regulatory chains. The cofactor is Zn(2+).

Involved in allosteric regulation of aspartate carbamoyltransferase. In Salmonella newport (strain SL254), this protein is Aspartate carbamoyltransferase regulatory chain.